The chain runs to 318 residues: Xanthocillin biosynthesis cluster transcription factor xanC (318 aa).

Residues 1 to 27 (MHSQTTKDEQSKDDSSNEKQDAIERRR) are compositionally biased toward basic and acidic residues. The tract at residues 1 to 39 (MHSQTTKDEQSKDDSSNEKQDAIERRRLQNRLSQRNHRR) is disordered. The bZIP domain occupies 20–52 (QDAIERRRLQNRLSQRNHRRKIRDRIAKLQERV). The basic motif stretch occupies residues 25-40 (RRRLQNRLSQRNHRRK). Residues 41–48 (IRDRIAKL) form a leucine-zipper region. Disordered regions lie at residues 71–107 (PPAASMMESKPQGDFDSNPLASVSEDPAISNPPQRNV), 123–171 (PSSS…FSLD), and 269–318 (GRHC…SMML). Low complexity-rich tracts occupy residues 123–139 (PSSSSLPSPTSPLPFDL) and 147–171 (STNSSPSTLLNSSPSSSQLSPFSLD). Positions 293-318 (APSSTPFCPLHPSQSSSLDNYQSMML) are enriched in polar residues.

Belongs to the bZIP family.

Its subcellular location is the nucleus. Functionally, transcription regulator that specifically up-regulates the gene cluster that mediates the biosynthesis of the isocyanide xanthocillin and its derivatives. In Aspergillus fumigatus (strain ATCC MYA-4609 / CBS 101355 / FGSC A1100 / Af293) (Neosartorya fumigata), this protein is Xanthocillin biosynthesis cluster transcription factor xanC.